The primary structure comprises 549 residues: Cation/acetate symporter ActP (549 aa).

A run of 13 helical transmembrane segments spans residues 33-53, 77-97, 103-123, 148-168, 183-203, 206-226, 262-282, 303-323, 355-375, 404-424, 428-448, 464-484, and 493-513; these read WQAIVMFLIFVVFTLGITYWA, LAIAGDYMSAASFLGISALVF, GLIYSLGFLVGWPIILFLIAE, ILSACGSLVVVALYLIAQMVG, IAVVLVGVLMMMYVLFGGMLA, WVQIIKAVLLLFGASFMAFMV, ISALSLGLGLMFGTAGLPHIL, GFMGYFYILTFIIGFGAIMLV, LFLGFISAVAFATILAVVAGL, VSKITVLVLGVIAIILGVLFE, IAFMVGLAFAIAASCNFPIIL, GGWLGLVTAVVLMVLGPTIWV, and IFPYEYPALFSISVAFIGIWF.

Belongs to the sodium:solute symporter (SSF) (TC 2.A.21) family.

It localises to the cell inner membrane. Transports acetate. The sequence is that of Cation/acetate symporter ActP from Citrobacter koseri (strain ATCC BAA-895 / CDC 4225-83 / SGSC4696).